A 2280-amino-acid polypeptide reads, in one-letter code: Acetyl-CoA carboxylase (2280 aa).

Positions 68 to 577 constitute a Biotin carboxylation domain; sequence VITSILIANN…TTGWLDRLIA (510 aa). Residues 226–418 form the ATP-grasp domain; sequence ETNIVTVDDD…LPAAQLQVAM (193 aa). Residue 266–271 participates in ATP binding; the sequence is GGGGKG. Mn(2+) contacts are provided by E375, E389, and N391. The active site involves R393. Residues 704-778 form the Biotinyl-binding domain; it reads LEQENDPTQL…DAGDILGILT (75 aa). K745 is subject to N6-biotinyllysine. A phosphoserine mark is found at S1179 and S1181. The 340-residue stretch at 1524 to 1863 folds into the CoA carboxyltransferase N-terminal domain; that stretch reads PYPTKEWLQP…KRNNPVPISP (340 aa). The segment at 1524–2181 is carboxyltransferase; that stretch reads PYPTKEWLQP…EHYALQKITQ (658 aa). CoA is bound by residues R1772, K2074, and R2076. The CoA carboxyltransferase C-terminal domain maps to 1867–2181; sequence TWDRDVEFYP…EHYALQKITQ (315 aa).

In terms of assembly, interacts with sad1. Biotin serves as cofactor. The cofactor is Mn(2+).

The protein localises to the cytoplasm. The catalysed reaction is hydrogencarbonate + acetyl-CoA + ATP = malonyl-CoA + ADP + phosphate + H(+). It carries out the reaction N(6)-biotinyl-L-lysyl-[protein] + hydrogencarbonate + ATP = N(6)-carboxybiotinyl-L-lysyl-[protein] + ADP + phosphate + H(+). The protein operates within lipid metabolism; malonyl-CoA biosynthesis; malonyl-CoA from acetyl-CoA: step 1/1. Its activity is regulated as follows. By phosphorylation. Carries out three functions: biotin carboxyl carrier protein, biotin carboxylase and carboxyltransferase. The chain is Acetyl-CoA carboxylase (cut6) from Schizosaccharomyces pombe (strain 972 / ATCC 24843) (Fission yeast).